The sequence spans 390 residues: Lipoyl synthase, mitochondrial (390 aa).

The N-terminal 18 residues, 1 to 18 (MALYRAPKLQRSLLNRCL), are a transit peptide targeting the mitochondrion. Cys99, Cys104, Cys110, Cys137, Cys141, Cys144, and Ser351 together coordinate [4Fe-4S] cluster. Positions 120 to 340 (AEGRSAATAT…KQVAEDLGFL (221 aa)) constitute a Radical SAM core domain.

Belongs to the radical SAM superfamily. Lipoyl synthase family. It depends on [4Fe-4S] cluster as a cofactor.

The protein resides in the mitochondrion. It carries out the reaction [[Fe-S] cluster scaffold protein carrying a second [4Fe-4S](2+) cluster] + N(6)-octanoyl-L-lysyl-[protein] + 2 oxidized [2Fe-2S]-[ferredoxin] + 2 S-adenosyl-L-methionine + 4 H(+) = [[Fe-S] cluster scaffold protein] + N(6)-[(R)-dihydrolipoyl]-L-lysyl-[protein] + 4 Fe(3+) + 2 hydrogen sulfide + 2 5'-deoxyadenosine + 2 L-methionine + 2 reduced [2Fe-2S]-[ferredoxin]. The protein operates within protein modification; protein lipoylation via endogenous pathway; protein N(6)-(lipoyl)lysine from octanoyl-[acyl-carrier-protein]: step 2/2. Catalyzes the radical-mediated insertion of two sulfur atoms into the C-6 and C-8 positions of the octanoyl moiety bound to the lipoyl domains of lipoate-dependent enzymes, thereby converting the octanoylated domains into lipoylated derivatives. The polypeptide is Lipoyl synthase, mitochondrial (Coprinopsis cinerea (strain Okayama-7 / 130 / ATCC MYA-4618 / FGSC 9003) (Inky cap fungus)).